Here is a 376-residue protein sequence, read N- to C-terminus: TATA box-binding protein-like 2 (376 aa).

Residues 103–184 (PDEVTQENKD…SDSLSLASIT (82 aa)) form a disordered region. Residues 108-122 (QENKDQPVISKHETE) are compositionally biased toward basic and acidic residues. Low complexity predominate over residues 126–159 (ESQSPQSRLPSPSEQDVGLGLNSSSLSNSHSQLH). Positions 175 to 184 (SDSLSLASIT) are enriched in polar residues.

Belongs to the TBP family. As to quaternary structure, interacts with TAF3.

It is found in the cytoplasm. The protein resides in the nucleus. Its function is as follows. Transcription factor required in complex with TAF3 for the differentiation of myoblasts into myocytes. The complex replaces TFIID at specific promoters at an early stage in the differentiation process. The polypeptide is TATA box-binding protein-like 2 (Pan troglodytes (Chimpanzee)).